The sequence spans 243 residues: Amphiregulin (243 aa).

The N-terminal stretch at 1 to 24 is a signal peptide; that stretch reads MRTPSLSLALSVLSLLVLGSGHYA. The propeptide occupies 25 to 96; sequence AGLELNGTSS…IVDDSVRVEQ (72 aa). A glycan (N-linked (GlcNAc...) asparagine) is linked at Asn-30. Residues 55–67 show a composition bias toward polar residues; the sequence is STISEMPSGSELS. 2 disordered regions span residues 55 to 75 and 98 to 135; these read STIS…DYSE and IKPK…KKKN. Residues 98-113 show a composition bias toward basic and acidic residues; that stretch reads IKPKENKTEGEKSSEK. The N-linked (GlcNAc...) asparagine glycan is linked to Asn-103. Residues 114-135 show a composition bias toward basic residues; that stretch reads PKRKKKGGKGGKGRRNRKKKKN. The EGF-like domain maps to 133 to 173; it reads KKNPCAAKFQNFCIHGECRYIENLEVVTCHCHQDYFGERCG. Disulfide bonds link Cys-137-Cys-150, Cys-145-Cys-161, and Cys-163-Cys-172. A helical transmembrane segment spans residues 190-213; sequence IALAAIIVFVSAVSVAAIGIITAV. Asn-236 carries an N-linked (GlcNAc...) asparagine glycan.

Belongs to the amphiregulin family. In terms of assembly, the immature precursor interacts with CNIH.

It is found in the membrane. Ligand of the EGF receptor/EGFR. Autocrine growth factor as well as a mitogen for a broad range of target cells including astrocytes, Schwann cells and fibroblasts. In Rattus norvegicus (Rat), this protein is Amphiregulin (Areg).